The sequence spans 348 residues: Zinc finger and SCAN domain-containing protein 16 (348 aa).

Positions 41–123 (RQHFRKLCYQ…TVLEDLEREL (83 aa)) constitute an SCAN box domain. Disordered stretches follow at residues 160 to 184 (PKKT…TKNE) and 205 to 226 (RLNK…EGRS). A compositionally biased stretch (basic and acidic residues) spans 163–184 (TQLEQEAGKPQRNGDKTRTKNE). 4 consecutive C2H2-type zinc fingers follow at residues 236–258 (YKCD…RRTH), 264–286 (YKCD…HRVH), 292–314 (YKCK…QRIH), and 320–342 (YECD…QRIH).

The protein belongs to the krueppel C2H2-type zinc-finger protein family.

The protein resides in the nucleus. Its function is as follows. May be involved in transcriptional regulation. This Homo sapiens (Human) protein is Zinc finger and SCAN domain-containing protein 16 (ZSCAN16).